A 658-amino-acid chain; its full sequence is DNA ligase (658 aa).

Residues Asp32 to Asp36 and Ser81 to Leu82 each bind NAD(+). Lys112 (N6-AMP-lysine intermediate) is an active-site residue. Residues Arg133, Glu167, and Lys306 each coordinate NAD(+). Zn(2+)-binding residues include Cys400, Cys403, Cys416, and Cys421. Residues Glu577 to Asn658 enclose the BRCT domain.

This sequence belongs to the NAD-dependent DNA ligase family. LigA subfamily. Mg(2+) serves as cofactor. Mn(2+) is required as a cofactor.

It catalyses the reaction NAD(+) + (deoxyribonucleotide)n-3'-hydroxyl + 5'-phospho-(deoxyribonucleotide)m = (deoxyribonucleotide)n+m + AMP + beta-nicotinamide D-nucleotide.. Functionally, DNA ligase that catalyzes the formation of phosphodiester linkages between 5'-phosphoryl and 3'-hydroxyl groups in double-stranded DNA using NAD as a coenzyme and as the energy source for the reaction. It is essential for DNA replication and repair of damaged DNA. The sequence is that of DNA ligase from Helicobacter pylori (strain G27).